Here is an 83-residue protein sequence, read N- to C-terminus: Large ribosomal subunit protein bL27 (83 aa).

This sequence belongs to the bacterial ribosomal protein bL27 family.

The sequence is that of Large ribosomal subunit protein bL27 (rpmA) from Thermotoga maritima (strain ATCC 43589 / DSM 3109 / JCM 10099 / NBRC 100826 / MSB8).